The chain runs to 729 residues: 1,4-alpha-glucan branching enzyme GlgB (729 aa).

The active-site Nucleophile is Asp-408. Residue Glu-461 is the Proton donor of the active site.

The protein belongs to the glycosyl hydrolase 13 family. GlgB subfamily. In terms of assembly, monomer.

It catalyses the reaction Transfers a segment of a (1-&gt;4)-alpha-D-glucan chain to a primary hydroxy group in a similar glucan chain.. It participates in glycan biosynthesis; glycogen biosynthesis. Catalyzes the formation of the alpha-1,6-glucosidic linkages in glycogen by scission of a 1,4-alpha-linked oligosaccharide from growing alpha-1,4-glucan chains and the subsequent attachment of the oligosaccharide to the alpha-1,6 position. The sequence is that of 1,4-alpha-glucan branching enzyme GlgB from Vibrio cholerae serotype O1 (strain ATCC 39315 / El Tor Inaba N16961).